The chain runs to 277 residues: Sulfur carrier protein FdhD (277 aa).

Cys-121 functions as the Cysteine persulfide intermediate in the catalytic mechanism. 260–265 (FCKPGR) provides a ligand contact to Mo-bis(molybdopterin guanine dinucleotide).

The protein belongs to the FdhD family.

Its subcellular location is the cytoplasm. Required for formate dehydrogenase (FDH) activity. Acts as a sulfur carrier protein that transfers sulfur from IscS to the molybdenum cofactor prior to its insertion into FDH. This is Sulfur carrier protein FdhD from Escherichia coli O6:H1 (strain CFT073 / ATCC 700928 / UPEC).